Consider the following 1295-residue polypeptide: Phosphoribosylformylglycinamidine synthase (1295 aa).

The disordered stretch occupies residues 305-327 (WPGAATGSGGEIRDEGATGRGAK). Residues 307-318 (GAATGSGGEIRD), 386-388 (TGY), and Ala678 contribute to the ATP site. Mg(2+)-binding residues include Asp679, Glu718, Asn722, and Asp884. An ATP-binding site is contributed by Ser886. One can recognise a Glutamine amidotransferase type-1 domain in the interval 1042–1295 (VAVLREQGVN…IFRNARKQLG (254 aa)). Cys1135 acts as the Nucleophile in catalysis. Active-site residues include His1260 and Glu1262.

It in the N-terminal section; belongs to the FGAMS family. As to quaternary structure, monomer.

Its subcellular location is the cytoplasm. The catalysed reaction is N(2)-formyl-N(1)-(5-phospho-beta-D-ribosyl)glycinamide + L-glutamine + ATP + H2O = 2-formamido-N(1)-(5-O-phospho-beta-D-ribosyl)acetamidine + L-glutamate + ADP + phosphate + H(+). Its pathway is purine metabolism; IMP biosynthesis via de novo pathway; 5-amino-1-(5-phospho-D-ribosyl)imidazole from N(2)-formyl-N(1)-(5-phospho-D-ribosyl)glycinamide: step 1/2. Its function is as follows. Phosphoribosylformylglycinamidine synthase involved in the purines biosynthetic pathway. Catalyzes the ATP-dependent conversion of formylglycinamide ribonucleotide (FGAR) and glutamine to yield formylglycinamidine ribonucleotide (FGAM) and glutamate. This is Phosphoribosylformylglycinamidine synthase from Salmonella typhi.